The sequence spans 98 residues: C-C motif chemokine 19 (98 aa).

The first 21 residues, Met1–Ser21, serve as a signal peptide directing secretion. 2 disulfide bridges follow: Cys29/Cys55 and Cys30/Cys71.

The protein belongs to the intercrine beta (chemokine CC) family. In terms of assembly, interacts with TNFAIP6 (via Link domain). In terms of tissue distribution, expressed at high levels in the lymph nodes, thymus and appendix. Intermediate levels seen in colon and trachea, while low levels found in spleen, small intestine, lung, kidney and stomach.

The protein localises to the secreted. Functionally, may play a role not only in inflammatory and immunological responses but also in normal lymphocyte recirculation and homing. May play an important role in trafficking of T-cells in thymus, and T-cell and B-cell migration to secondary lymphoid organs. Binds to chemokine receptor CCR7. Recombinant CCL19 shows potent chemotactic activity for T-cells and B-cells but not for granulocytes and monocytes. Binds to atypical chemokine receptor ACKR4 and mediates the recruitment of beta-arrestin (ARRB1/2) to ACKR4. This chain is C-C motif chemokine 19 (CCL19), found in Homo sapiens (Human).